Here is a 333-residue protein sequence, read N- to C-terminus: Cap-specific mRNA (nucleoside-2'-O-)-methyltransferase (333 aa).

MRNA is bound at residue Tyr-22. 8 residues coordinate S-adenosyl-L-methionine: Gln-39, Tyr-66, Gly-68, Gly-72, Asp-95, Arg-97, Val-116, and Asp-138. The interval 169-249 is binding to NPH-I; sequence PVASSLKWRC…NKIVRNKVVV (81 aa). The binding to Rap94 stretch occupies residues 169–333; sequence PVASSLKWRC…NSKRSVRGNK (165 aa). Lys-175 serves as the catalytic For methyltransferase activity. Residues 177–180, Asp-182, 205–207, and Glu-233 contribute to the mRNA site; these read RCPF and SAE.

This sequence belongs to the class I-like SAM-binding methyltransferase superfamily. Poxvirus/kinetoplastid 2'-O-MTase family. Interacts with poly(A) polymerase catalytic subunit OPG063. Interacts with OPG109 and OPG123; these interactions might help linking transcription to capping and polyadenylation.

It localises to the virion. It carries out the reaction a 5'-end (N(7)-methyl 5'-triphosphoguanosine)-ribonucleoside in mRNA + S-adenosyl-L-methionine = a 5'-end (N(7)-methyl 5'-triphosphoguanosine)-(2'-O-methyl-ribonucleoside) in mRNA + S-adenosyl-L-homocysteine + H(+). Displays methyltransferase, positive regulation of the poly(A) polymerase and transcription elongation activities. Involved in the modification of both mRNA ends and in intermediate and late gene positive transcription elongation. At the mRNAs 5' end, methylates the ribose 2' OH group of the first transcribed nucleotide, thereby producing a 2'-O-methylpurine cap. At the 3' end, functions as a processivity factor which stimulates the activity of the viral poly(A) polymerase OPG063 that creates mRNA's poly(A) tail. In the presence of OPG102, OPG063 does not dissociate from the RNA allowing tail elongation to around 250 adenylates. The sequence is that of Cap-specific mRNA (nucleoside-2'-O-)-methyltransferase (OPG102) from Homo sapiens (Human).